The primary structure comprises 219 residues: tRNA (guanine-N(7)-)-methyltransferase (219 aa).

Residues glutamate 51, glutamate 76, aspartate 103, and aspartate 125 each contribute to the S-adenosyl-L-methionine site. The active site involves aspartate 125. Residues lysine 129, aspartate 161, and 199–202 (TRYE) contribute to the substrate site.

The protein belongs to the class I-like SAM-binding methyltransferase superfamily. TrmB family.

The enzyme catalyses guanosine(46) in tRNA + S-adenosyl-L-methionine = N(7)-methylguanosine(46) in tRNA + S-adenosyl-L-homocysteine. It functions in the pathway tRNA modification; N(7)-methylguanine-tRNA biosynthesis. Functionally, catalyzes the formation of N(7)-methylguanine at position 46 (m7G46) in tRNA. The polypeptide is tRNA (guanine-N(7)-)-methyltransferase (Hyphomonas neptunium (strain ATCC 15444)).